The primary structure comprises 83 residues: Cytochrome b559 subunit alpha (83 aa).

The helical transmembrane segment at 21-35 (VIHSITIPSLFIAGW) threads the bilayer. H23 is a binding site for heme.

It belongs to the PsbE/PsbF family. In terms of assembly, heterodimer of an alpha subunit and a beta subunit. PSII is composed of 1 copy each of membrane proteins PsbA, PsbB, PsbC, PsbD, PsbE, PsbF, PsbH, PsbI, PsbJ, PsbK, PsbL, PsbM, PsbT, PsbX, PsbY, PsbZ, Psb30/Ycf12, at least 3 peripheral proteins of the oxygen-evolving complex and a large number of cofactors. It forms dimeric complexes. Heme b is required as a cofactor.

The protein resides in the plastid. It is found in the chloroplast thylakoid membrane. This b-type cytochrome is tightly associated with the reaction center of photosystem II (PSII). PSII is a light-driven water:plastoquinone oxidoreductase that uses light energy to abstract electrons from H(2)O, generating O(2) and a proton gradient subsequently used for ATP formation. It consists of a core antenna complex that captures photons, and an electron transfer chain that converts photonic excitation into a charge separation. In Acorus calamus (Sweet flag), this protein is Cytochrome b559 subunit alpha.